The primary structure comprises 155 residues: Small ribosomal subunit protein uS7c (155 aa).

The protein belongs to the universal ribosomal protein uS7 family. In terms of assembly, part of the 30S ribosomal subunit.

Its subcellular location is the plastid. It is found in the chloroplast. One of the primary rRNA binding proteins, it binds directly to 16S rRNA where it nucleates assembly of the head domain of the 30S subunit. The chain is Small ribosomal subunit protein uS7c (rps7) from Physcomitrium patens (Spreading-leaved earth moss).